The following is a 299-amino-acid chain: tRNA pseudouridine synthase B (299 aa).

Asp-38 (nucleophile) is an active-site residue.

Belongs to the pseudouridine synthase TruB family. Type 1 subfamily.

The enzyme catalyses uridine(55) in tRNA = pseudouridine(55) in tRNA. Responsible for synthesis of pseudouridine from uracil-55 in the psi GC loop of transfer RNAs. In Pediococcus pentosaceus (strain ATCC 25745 / CCUG 21536 / LMG 10740 / 183-1w), this protein is tRNA pseudouridine synthase B.